The sequence spans 200 residues: GTP-dependent dephospho-CoA kinase (200 aa).

GTP contacts are provided by Asp56, Val57, Val58, Asp75, and Glu132.

Belongs to the GTP-dependent DPCK family.

The catalysed reaction is 3'-dephospho-CoA + GTP = GDP + CoA + H(+). The protein operates within cofactor biosynthesis; coenzyme A biosynthesis. Catalyzes the GTP-dependent phosphorylation of the 3'-hydroxyl group of dephosphocoenzyme A to form coenzyme A (CoA). This Caldivirga maquilingensis (strain ATCC 700844 / DSM 13496 / JCM 10307 / IC-167) protein is GTP-dependent dephospho-CoA kinase.